The following is a 445-amino-acid chain: Probable glycine dehydrogenase (decarboxylating) subunit 1 (445 aa).

This sequence belongs to the GcvP family. N-terminal subunit subfamily. As to quaternary structure, the glycine cleavage system is composed of four proteins: P, T, L and H. In this organism, the P 'protein' is a heterodimer of two subunits.

The enzyme catalyses N(6)-[(R)-lipoyl]-L-lysyl-[glycine-cleavage complex H protein] + glycine + H(+) = N(6)-[(R)-S(8)-aminomethyldihydrolipoyl]-L-lysyl-[glycine-cleavage complex H protein] + CO2. Its function is as follows. The glycine cleavage system catalyzes the degradation of glycine. The P protein binds the alpha-amino group of glycine through its pyridoxal phosphate cofactor; CO(2) is released and the remaining methylamine moiety is then transferred to the lipoamide cofactor of the H protein. The polypeptide is Probable glycine dehydrogenase (decarboxylating) subunit 1 (Anaeromyxobacter dehalogenans (strain 2CP-1 / ATCC BAA-258)).